A 171-amino-acid polypeptide reads, in one-letter code: uncharacterized protein (171 aa).

An N-terminal signal peptide occupies residues 1–24 (MIFDSLTMTQSSLSLLLLTGAIFS). The Extracellular portion of the chain corresponds to 25-70 (ISALYLTLFHRCATFSATSDLFLLVPLKFVSRDINDRLKTHYHHSC). A helical membrane pass occupies residues 71–91 (LGSPFLCIIFLFISPLLNYHF). Residues 92–140 (RSLVRPPKIHQKGSIPTLTKNAETRCSHHLKQAAATGEVCKVVVIIKGH) lie on the Cytoplasmic side of the membrane. A helical membrane pass occupies residues 141 to 161 (ILKDCSIFFFIIFPLIYPLFI). Topologically, residues 162-171 (NCSSKYNGLQ) are extracellular.

It is found in the membrane. This is an uncharacterized protein from Saccharomyces cerevisiae (strain ATCC 204508 / S288c) (Baker's yeast).